A 635-amino-acid polypeptide reads, in one-letter code: Allantoin permease (635 aa).

Residues 1–144 are Cytoplasmic-facing; sequence MANDALSAIF…AGTGLQLGLN (144 aa). A helical membrane pass occupies residues 145–165; that stretch reads WWQCWLTVWIGYTFAGIFVVL. Residues 166–174 are Extracellular-facing; it reads NSRFGSAYH. Residues 175–195 traverse the membrane as a helical segment; the sequence is LSFPITVRASFGIFFSMWPII. Residues 196–198 are Cytoplasmic-facing; sequence NRV. A helical membrane pass occupies residues 199–219; it reads VMAIVWYAVQAWLGATPVALM. Over 220–243 the chain is Extracellular; that stretch reads LKSIFGKNLEDRIPNHFGSPNSTT. A helical membrane pass occupies residues 244–264; the sequence is FEFMCFFIFWVVSIPFVLVAP. The Cytoplasmic segment spans residues 265–269; sequence HKIRH. The helical transmembrane segment at 270–290 threads the bilayer; that stretch reads LFTVKAALIPFAAFGFLIWAL. Topologically, residues 291-311 are extracellular; sequence KKSHGKIELGTLNDYSPHGSE. The helical transmembrane segment at 312–332 threads the bilayer; that stretch reads FSWIFVRSLMACVANFAALII. Residues 333–351 lie on the Cytoplasmic side of the membrane; that stretch reads NAPDFGRFAKNPQASLWPQ. Residues 352–372 form a helical membrane-spanning segment; the sequence is LVAIPLFFAITCLIGIIVTAA. Residues 373–401 are Extracellular-facing; sequence GYHLYGVNYWSPLDVLGQFLETTYTRGTR. The helical transmembrane segment at 402–422 threads the bilayer; that stretch reads AGVFLISFVFALAQLGTNISA. The Cytoplasmic portion of the chain corresponds to 423–443; that stretch reads NSLACGADMTALFPRYINIRR. The helical transmembrane segment at 444-464 threads the bilayer; that stretch reads GSLFCVAMALCICPWNLMASS. Residues 465 to 466 lie on the Extracellular side of the membrane; the sequence is SK. The chain crosses the membrane as a helical span at residues 467-487; the sequence is FTSALGAYAIFLSSIAGVICA. The Cytoplasmic portion of the chain corresponds to 488–522; that stretch reads DYFVVRRGYVKLTHLFLAQKGSFYMFGNKFGANWR. Residues 523–543 traverse the membrane as a helical segment; it reads AFVAYICGIAPNLPGFIGDVG. Residues 544 to 560 are Extracellular-facing; the sequence is APKITVSEGAMRLYYLG. A helical membrane pass occupies residues 561-581; it reads YPVGFFISAVIYLILCYFFPV. Residues 582-635 lie on the Cytoplasmic side of the membrane; sequence PGTPVTNFLTEKGWFQRWAYVEDFEQDWKNELRRDDLCDDTVSIYDGTEEKIVY.

This sequence belongs to the purine-cytosine permease (2.A.39) family.

It localises to the membrane. Its function is as follows. Transport of allantoin. The chain is Allantoin permease (DAL4) from Saccharomyces cerevisiae (strain ATCC 204508 / S288c) (Baker's yeast).